The primary structure comprises 350 residues: Protein-glutamate methylesterase/protein-glutamine glutaminase (350 aa).

The region spanning 5-122 is the Response regulatory domain; that stretch reads KVLCVDDSAL…RDGLIEYSEV (118 aa). Asp-56 bears the 4-aspartylphosphate mark. A CheB-type methylesterase domain is found at 152 to 346; that stretch reads PFASSEKLVI…ERILTRLGDR (195 aa). Active-site residues include Ser-165, His-191, and Asp-288.

This sequence belongs to the CheB family. Phosphorylated by CheA. Phosphorylation of the N-terminal regulatory domain activates the methylesterase activity.

The protein localises to the cytoplasm. The enzyme catalyses [protein]-L-glutamate 5-O-methyl ester + H2O = L-glutamyl-[protein] + methanol + H(+). It catalyses the reaction L-glutaminyl-[protein] + H2O = L-glutamyl-[protein] + NH4(+). In terms of biological role, involved in chemotaxis. Part of a chemotaxis signal transduction system that modulates chemotaxis in response to various stimuli. Catalyzes the demethylation of specific methylglutamate residues introduced into the chemoreceptors (methyl-accepting chemotaxis proteins or MCP) by CheR. Also mediates the irreversible deamidation of specific glutamine residues to glutamic acid. The chain is Protein-glutamate methylesterase/protein-glutamine glutaminase from Bordetella pertussis (strain Tohama I / ATCC BAA-589 / NCTC 13251).